The sequence spans 756 residues: Ribosomal RNA large subunit methyltransferase K/L (756 aa).

One can recognise a THUMP domain in the interval 46–157; that stretch reads TAYRLCLWSR…RGEAILSLDL (112 aa). Residues 395-409 show a composition bias toward basic and acidic residues; it reads ERRTPEQRQAEREQA. Positions 395–441 are disordered; that stretch reads ERRTPEQRQAEREQAAYDQTPNEPQERKFNKNGNPIKPTPAPAPVIE.

Belongs to the methyltransferase superfamily. RlmKL family.

Its subcellular location is the cytoplasm. The catalysed reaction is guanosine(2445) in 23S rRNA + S-adenosyl-L-methionine = N(2)-methylguanosine(2445) in 23S rRNA + S-adenosyl-L-homocysteine + H(+). The enzyme catalyses guanosine(2069) in 23S rRNA + S-adenosyl-L-methionine = N(2)-methylguanosine(2069) in 23S rRNA + S-adenosyl-L-homocysteine + H(+). Its function is as follows. Specifically methylates the guanine in position 2445 (m2G2445) and the guanine in position 2069 (m7G2069) of 23S rRNA. The sequence is that of Ribosomal RNA large subunit methyltransferase K/L from Pseudomonas fluorescens (strain Pf0-1).